The chain runs to 299 residues: Very long chain fatty acid elongase 5 (299 aa).

Met-1 carries the post-translational modification N-acetylmethionine. 7 helical membrane-spanning segments follow: residues 26 to 46, 64 to 84, 112 to 132, 139 to 158, 168 to 187, 205 to 225, and 227 to 247; these read WFLL…LLIV, ILVV…YELV, VLWW…FFIL, ITVL…WFVM, FGAT…YGLS, GQLV…IWPC, and FPLG…ALFT.

This sequence belongs to the ELO family. ELOVL5 subfamily. As to quaternary structure, interacts with TECR. Highly expressed in lung and brain.

The protein localises to the endoplasmic reticulum membrane. The protein resides in the cell projection. It is found in the dendrite. It carries out the reaction a very-long-chain acyl-CoA + malonyl-CoA + H(+) = a very-long-chain 3-oxoacyl-CoA + CO2 + CoA. The catalysed reaction is (6Z,9Z,12Z,15Z)-octadecatetraenoyl-CoA + malonyl-CoA + H(+) = (8Z,11Z,14Z,17Z)-3-oxoicosatetraenoyl-CoA + CO2 + CoA. The enzyme catalyses (6Z,9Z,12Z)-octadecatrienoyl-CoA + malonyl-CoA + H(+) = (8Z,11Z,14Z)-3-oxoeicosatrienoyl-CoA + CO2 + CoA. It catalyses the reaction (5Z,8Z,11Z,14Z,17Z)-eicosapentaenoyl-CoA + malonyl-CoA + H(+) = 3-oxo-(7Z,10Z,13Z,16Z,19Z)-docosapentaenoyl-CoA + CO2 + CoA. It carries out the reaction (5Z,8Z,11Z,14Z)-eicosatetraenoyl-CoA + malonyl-CoA + H(+) = (7Z,10Z,13Z,16Z)-3-oxodocosatetraenoyl-CoA + CO2 + CoA. The catalysed reaction is (9Z,12Z,15Z)-octadecatrienoyl-CoA + malonyl-CoA + H(+) = (11Z,14Z,17Z)-3-oxoeicosatrienoyl-CoA + CO2 + CoA. The enzyme catalyses (9Z)-hexadecenoyl-CoA + malonyl-CoA + H(+) = 3-oxo-(11Z)-octadecenoyl-CoA + CO2 + CoA. It catalyses the reaction (9Z)-octadecenoyl-CoA + malonyl-CoA + H(+) = 3-oxo-(11Z)-eicosenoyl-CoA + CO2 + CoA. It carries out the reaction (11Z)-octadecenoyl-CoA + malonyl-CoA + H(+) = 3-oxo-(13Z)-eicosenoyl-CoA + CO2 + CoA. The catalysed reaction is (9Z,12Z)-octadecadienoyl-CoA + malonyl-CoA + H(+) = (11Z,14Z)-3-oxoicosa-11,14-dienoyl-CoA + CO2 + CoA. It participates in lipid metabolism; polyunsaturated fatty acid biosynthesis. In terms of biological role, catalyzes the first and rate-limiting reaction of the four reactions that constitute the long-chain fatty acids elongation cycle. This endoplasmic reticulum-bound enzymatic process allows the addition of 2 carbons to the chain of long- and very long-chain fatty acids (VLCFAs) per cycle. Condensing enzyme that acts specifically toward polyunsaturated acyl-CoA with the higher activity toward C18:3(n-6) acyl-CoA. May participate in the production of monounsaturated and of polyunsaturated VLCFAs of different chain lengths that are involved in multiple biological processes as precursors of membrane lipids and lipid mediators. In conditions where the essential linoleic and alpha linoleic fatty acids are lacking it is also involved in the synthesis of Mead acid from oleic acid. The polypeptide is Very long chain fatty acid elongase 5 (Rattus norvegicus (Rat)).